Here is a 597-residue protein sequence, read N- to C-terminus: Gamma-terpinene synthase, chloroplastic (597 aa).

The transit peptide at 1–47 (MATLSMQVSILNKQLKNLNSFGMRASKLPLVARRVDVSTTRLRPICS) directs the protein to the chloroplast. Mn(2+)-binding residues include Asp-350 and Asp-354. The short motif at 350-354 (DDVYD) is the DDXXD motif element. Homodimerization regions lie at residues 356–362 (YGTLDEL) and 428–464 (EAKWYYAGYTPTLAEYLENAKVSISSPTIISQVYFTL). Positions 494 and 502 each coordinate Mn(2+).

This sequence belongs to the terpene synthase family. As to quaternary structure, homodimer. It depends on Mn(2+) as a cofactor. The cofactor is Mg(2+).

It is found in the plastid. It localises to the chloroplast. It carries out the reaction (2E)-geranyl diphosphate = gamma-terpinene + diphosphate. Its pathway is secondary metabolite biosynthesis; terpenoid biosynthesis. Involved in the biosynthesis of phenolic monoterpenes natural products thymol and carvacrol which have a broad range of biological activities acting as antimicrobial compounds, insecticides, antioxidants and pharmaceutical agents. Monoterpene synthase which catalyzes the conversion of geranyl diphosphate (GPP) to gamma-terpinene and minor amounts of other monoterpenes (e.g. alpha-thujene, alpha-terpinene, myrcene, sabinene, (+)-R-limonene, alpha-pinene and alpha-phellandrene). This chain is Gamma-terpinene synthase, chloroplastic, found in Thymus caespititius (Cretan thyme).